The chain runs to 381 residues: Chymosin (381 aa).

A signal peptide spans 1-16 (MRCLVVLLAALALSQA). Positions 17 to 58 (SGITRIPLHKGKTLRKALKERGLLEDFLQRQQYAVSSKYSSL) are cleaved as a propeptide — activation peptide. Residues 74–378 (YFGKIYIGTP…DRANNRVGLA (305 aa)) form the Peptidase A1 domain. D92 is an active-site residue. An intrachain disulfide couples C105 to C110. N158 carries N-linked (GlcNAc...) asparagine glycosylation. C265 and C269 are oxidised to a cystine. Residue D274 is part of the active site. C308 and C341 are joined by a disulfide. N-linked (GlcNAc...) asparagine glycosylation occurs at N349.

The protein belongs to the peptidase A1 family.

The enzyme catalyses Broad specificity similar to that of pepsin A. Clots milk by cleavage of a single 104-Ser-Phe-|-Met-Ala-107 bond in kappa-chain of casein.. Chymosin is synthesized in the mucosa of the abomasum (fourth stomach) of young (unweaned) ruminants. The enzyme hydrolyzes casein to paracasein. The chain is Chymosin from Camelus dromedarius (Dromedary).